The primary structure comprises 272 residues: F-actin-capping protein subunit beta (272 aa).

Residue S2 is modified to N-acetylserine. S2 carries the post-translational modification Phosphoserine. K235 is subject to N6-acetyllysine. V263 carries the post-translational modification Phosphoserine.

It belongs to the F-actin-capping protein beta subunit family. As to quaternary structure, component of the F-actin capping complex, composed of a heterodimer of an alpha and a beta subunit. Subunit of dynactin, a multiprotein complex part of a tripartite complex with dynein and a adapter, such as BICDL1, BICD2 or HOOK3. The dynactin complex is built around ACTR1A/ACTB filament and consists of an actin-related filament composed of a shoulder domain, a pointed end and a barbed end. Its length is defined by its flexible shoulder domain. The soulder is composed of 2 DCTN1 subunits, 4 DCTN2 and 2 DCTN3. The 4 DCNT2 (via N-terminus) bind the ACTR1A filament and act as molecular rulers to determine the length. The pointed end is important for binding dynein-dynactin cargo adapters. Consists of 4 subunits: ACTR10, DCNT4, DCTN5 and DCTN6. The barbed end is composed of a CAPZA1:CAPZB heterodimers, which binds ACTR1A/ACTB filament and dynactin and stabilizes dynactin. Interacts with ARHGAP17. Interaction with RCSD1/CAPZIP. Component of the WASH complex, composed of F-actin-capping protein subunit alpha (CAPZA1, CAPZA2 or CAPZA3), F-actin-capping protein subunit beta (CAPZB), WASH (WASHC1, WASH2P, WASH3P, WASH4P, WASH5P or WASH6P), WASHC2 (WASHC2A or WASHC2C), WASHC3, WASHC4 and WASHC5. Interacts with ACTG1. Directly interacts with CRACD; this interaction decreases binding to actin.

It is found in the cytoplasm. The protein localises to the cytoskeleton. Its subcellular location is the myofibril. The protein resides in the sarcomere. Its function is as follows. F-actin-capping proteins bind in a Ca(2+)-independent manner to the fast growing ends of actin filaments (barbed end) thereby blocking the exchange of subunits at these ends. Unlike other capping proteins (such as gelsolin and severin), these proteins do not sever actin filaments. Plays a role in the regulation of cell morphology and cytoskeletal organization. Forms, with CAPZB, the barbed end of the fast growing ends of actin filaments in the dynactin complex and stabilizes dynactin structure. The dynactin multiprotein complex activates the molecular motor dynein for ultra-processive transport along microtubules. In Homo sapiens (Human), this protein is F-actin-capping protein subunit beta.